The chain runs to 449 residues: Asparagine--tRNA ligase (449 aa).

Belongs to the class-II aminoacyl-tRNA synthetase family. As to quaternary structure, homodimer.

Its subcellular location is the cytoplasm. The enzyme catalyses tRNA(Asn) + L-asparagine + ATP = L-asparaginyl-tRNA(Asn) + AMP + diphosphate + H(+). The chain is Asparagine--tRNA ligase from Mesomycoplasma hyopneumoniae (strain 7448) (Mycoplasma hyopneumoniae).